The chain runs to 217 residues: Imidazole glycerol phosphate synthase subunit HisH (217 aa).

The region spanning 3–217 is the Glutamine amidotransferase type-1 domain; sequence SVAVIDYGMG…FLRWEPWSSR (215 aa). Cys82 acts as the Nucleophile in catalysis. Residues His193 and Glu195 contribute to the active site.

Heterodimer of HisH and HisF.

Its subcellular location is the cytoplasm. It catalyses the reaction 5-[(5-phospho-1-deoxy-D-ribulos-1-ylimino)methylamino]-1-(5-phospho-beta-D-ribosyl)imidazole-4-carboxamide + L-glutamine = D-erythro-1-(imidazol-4-yl)glycerol 3-phosphate + 5-amino-1-(5-phospho-beta-D-ribosyl)imidazole-4-carboxamide + L-glutamate + H(+). The enzyme catalyses L-glutamine + H2O = L-glutamate + NH4(+). It participates in amino-acid biosynthesis; L-histidine biosynthesis; L-histidine from 5-phospho-alpha-D-ribose 1-diphosphate: step 5/9. In terms of biological role, IGPS catalyzes the conversion of PRFAR and glutamine to IGP, AICAR and glutamate. The HisH subunit catalyzes the hydrolysis of glutamine to glutamate and ammonia as part of the synthesis of IGP and AICAR. The resulting ammonia molecule is channeled to the active site of HisF. In Methylococcus capsulatus (strain ATCC 33009 / NCIMB 11132 / Bath), this protein is Imidazole glycerol phosphate synthase subunit HisH.